A 284-amino-acid chain; its full sequence is NAD kinase (284 aa).

The active-site Proton acceptor is the D60. NAD(+) contacts are provided by residues 60 to 61, 134 to 135, K145, R162, D164, and Q235; these read DG and ND.

Belongs to the NAD kinase family. The cofactor is a divalent metal cation.

The protein resides in the cytoplasm. It carries out the reaction NAD(+) + ATP = ADP + NADP(+) + H(+). Involved in the regulation of the intracellular balance of NAD and NADP, and is a key enzyme in the biosynthesis of NADP. Catalyzes specifically the phosphorylation on 2'-hydroxyl of the adenosine moiety of NAD to yield NADP. The protein is NAD kinase of Treponema denticola (strain ATCC 35405 / DSM 14222 / CIP 103919 / JCM 8153 / KCTC 15104).